The primary structure comprises 536 residues: Light-independent protochlorophyllide reductase subunit B (536 aa).

[4Fe-4S] cluster is bound at residue aspartate 36. Aspartate 274 serves as the catalytic Proton donor. 409-410 (GL) provides a ligand contact to substrate. The tract at residues 426–448 (DEAGPSHHGGKAVPASAPRADEA) is disordered.

This sequence belongs to the ChlB/BchB/BchZ family. In terms of assembly, protochlorophyllide reductase is composed of three subunits; BchL, BchN and BchB. Forms a heterotetramer of two BchB and two BchN subunits. [4Fe-4S] cluster is required as a cofactor.

It catalyses the reaction chlorophyllide a + oxidized 2[4Fe-4S]-[ferredoxin] + 2 ADP + 2 phosphate = protochlorophyllide a + reduced 2[4Fe-4S]-[ferredoxin] + 2 ATP + 2 H2O. It participates in porphyrin-containing compound metabolism; bacteriochlorophyll biosynthesis (light-independent). Functionally, component of the dark-operative protochlorophyllide reductase (DPOR) that uses Mg-ATP and reduced ferredoxin to reduce ring D of protochlorophyllide (Pchlide) to form chlorophyllide a (Chlide). This reaction is light-independent. The NB-protein (BchN-BchB) is the catalytic component of the complex. This chain is Light-independent protochlorophyllide reductase subunit B, found in Cereibacter sphaeroides (strain KD131 / KCTC 12085) (Rhodobacter sphaeroides).